Here is a 344-residue protein sequence, read N- to C-terminus: L-rhamnose-proton symporter (344 aa).

Helical transmembrane passes span 4–24, 38–58, 68–88, 101–121, 137–157, 175–195, 214–234, 259–279, 290–310, and 321–341; these read AITMGIFWHLIGAASAACFYA, WSVGGIVSWLILPWTISALLL, FNLSTLLPVFLFGAMWGIGNI, MGIGIAIGITLIVGTLMTPII, TLLGVFVALIGVGIVTRAGQL, LLLAVICGIFSAGMSFAMNAA, LPSYVVIMGGGALVNLGFCFI, ILLSALGGLMWYLQFFFYAWG, MSWMLHMSFYVLCGGLVGLVL, and VAVLSLGCVVIIIAANIVGLG.

Belongs to the L-rhamnose transporter (TC 2.A.7.6) family.

Its subcellular location is the cell inner membrane. It catalyses the reaction L-rhamnopyranose(in) + H(+)(in) = L-rhamnopyranose(out) + H(+)(out). In terms of biological role, uptake of L-rhamnose across the cytoplasmic membrane with the concomitant transport of protons into the cell (symport system). This chain is L-rhamnose-proton symporter, found in Salmonella paratyphi A (strain ATCC 9150 / SARB42).